A 558-amino-acid polypeptide reads, in one-letter code: Galactoside 2-alpha-L-fucosyltransferase (558 aa).

At 1 to 43 (MDQNSYRRRSSPIRTTTGGSKSVNFSELLQMKYLSSGTMKLTR) the chain is on the cytoplasmic side. The helical; Signal-anchor for type II membrane protein transmembrane segment at 44 to 64 (TFTTCLIVFSVLVAFSMIFHQ) threads the bilayer. Residues 65–558 (HPSDSNRIMG…EDISWGLKLV (494 aa)) are Lumenal-facing. N-linked (GlcNAc...) asparagine glycans are attached at residues N88 and N504.

The protein belongs to the glycosyltransferase 37 family. Homodimer. Interacts with MUR3, XLT2, XXT2 and XXT5. In terms of tissue distribution, expressed in roots, stems, leaves, flowers, siliques and seedlings.

The protein localises to the golgi apparatus. The protein resides in the golgi stack membrane. It is found in the golgi apparatus membrane. Involved in cell wall biosynthesis. Is both necessary and sufficient for the addition of the terminal fucosyl residue on xyloglucan side chains, but is not involved in the fucosylation of other cell wall components. Associates with other xyloglucan-synthesizing enzymes to form multiprotein complexes for xyloglucan synthesis in the Golgi. The sequence is that of Galactoside 2-alpha-L-fucosyltransferase (FUT1) from Arabidopsis thaliana (Mouse-ear cress).